Reading from the N-terminus, the 186-residue chain is UPF0301 protein Nmul_A2478 (186 aa).

This sequence belongs to the UPF0301 (AlgH) family.

This is UPF0301 protein Nmul_A2478 from Nitrosospira multiformis (strain ATCC 25196 / NCIMB 11849 / C 71).